The chain runs to 472 residues: Cysteine--tRNA ligase (472 aa).

Cys-28 contributes to the Zn(2+) binding site. A 'HIGH' region motif is present at residues 30–40; that stretch reads PTVYNYIHIGN. Positions 212, 237, and 241 each coordinate Zn(2+). The 'KMSKS' region signature appears at 271-275; that stretch reads KMSKS. Lys-274 contacts ATP.

Belongs to the class-I aminoacyl-tRNA synthetase family. Monomer. Requires Zn(2+) as cofactor.

Its subcellular location is the cytoplasm. It catalyses the reaction tRNA(Cys) + L-cysteine + ATP = L-cysteinyl-tRNA(Cys) + AMP + diphosphate. This is Cysteine--tRNA ligase from Limosilactobacillus fermentum (strain NBRC 3956 / LMG 18251) (Lactobacillus fermentum).